Consider the following 347-residue polypeptide: Phospho-N-acetylmuramoyl-pentapeptide-transferase (347 aa).

Helical transmembrane passes span 10–30 (SLVFFLLTVFALAFILGIFLG), 67–87 (AGGILFFIVLLLTIFFWLPLG), 91–111 (TWLFAFLIISWSSLGWYDDIV), 127–147 (FVLQLLISAVITTAVMYIYKG), 164–184 (LGHSVLGQVFYFILAVLAIVG), 195–215 (LDGLAAGTTCMCAFGLLVVAV), 220–240 (IPLATDIPVLLTALLGVSLAF), 250–270 (VFMGDTGSLLIGGVLGSCAVM), 275–295 (LLLILLGGVFVAEAGSVILQI), and 325–345 (VVKRFWTAGFFCMVFGIIAAL).

It belongs to the glycosyltransferase 4 family. MraY subfamily. Mg(2+) is required as a cofactor.

It localises to the cell inner membrane. It carries out the reaction UDP-N-acetyl-alpha-D-muramoyl-L-alanyl-gamma-D-glutamyl-meso-2,6-diaminopimeloyl-D-alanyl-D-alanine + di-trans,octa-cis-undecaprenyl phosphate = di-trans,octa-cis-undecaprenyl diphospho-N-acetyl-alpha-D-muramoyl-L-alanyl-D-glutamyl-meso-2,6-diaminopimeloyl-D-alanyl-D-alanine + UMP. The protein operates within cell wall biogenesis; peptidoglycan biosynthesis. Catalyzes the initial step of the lipid cycle reactions in the biosynthesis of the cell wall peptidoglycan: transfers peptidoglycan precursor phospho-MurNAc-pentapeptide from UDP-MurNAc-pentapeptide onto the lipid carrier undecaprenyl phosphate, yielding undecaprenyl-pyrophosphoryl-MurNAc-pentapeptide, known as lipid I. The chain is Phospho-N-acetylmuramoyl-pentapeptide-transferase from Chlamydia abortus (strain DSM 27085 / S26/3) (Chlamydophila abortus).